We begin with the raw amino-acid sequence, 961 residues long: Zinc finger protein basonuclin-1 (961 aa).

The segment at 210-219 is hydrophobic; the sequence is MTFMLPFQFF. 2 C2H2-type zinc fingers span residues 325–348 and 353–382; these read VFCT…NAVH and HKCT…PRLH. Positions 370 to 393 are disordered; the sequence is RNRHSANPNPRLHMPMNRNNRDKD. The short motif at 501 to 507 is the Nuclear localization signal element; it reads PKKKSRK. Serine 505 and serine 509 each carry phosphoserine. Positions 523–572 are disordered; the sequence is EEKRHSLSSDDEVPLQVVSEDEPEDSSPRSDRVPEEQHTQLSLEEPLPQG. The span at 531–547 shows a compositional bias: acidic residues; that stretch reads SDDEVPLQVVSEDEPED. Over residues 548 to 560 the composition is skewed to basic and acidic residues; sequence SSPRSDRVPEEQH. 2 consecutive C2H2-type zinc fingers follow at residues 687-711 and 715-743; these read FQCD…NTHA and HACT…SLHQ. A disordered region spans residues 810–864; sequence ESYNSGPPSEGTILDLSTTSSMKSESSSHSSWDSDGVSEEGTALMEDSDGNCEGQ. Positions 826-844 are enriched in low complexity; the sequence is STTSSMKSESSSHSSWDSD. 2 C2H2-type zinc fingers span residues 895-918 and 923-950; these read ITCH…KTVH and HKCK…PNLH. Residues 937–961 form a disordered region; the sequence is VRSRNRHSQNPNLHKSLASSPSHLQ.

In terms of assembly, interacts with HSF2BP (via C-terminus). Phosphorylation on Ser-505 and Ser-509 leads to cytoplasmic localization. Epidermis and germ cells of testis and ovary.

Its subcellular location is the nucleus. The protein resides in the cytoplasm. It is found in the nucleoplasm. Its function is as follows. Transcriptional activator. It is likely involved in the regulation of keratinocytes terminal differentiation in squamous epithelia and hair follicles. Required for the maintenance of spermatogenesis. It is involved in the positive regulation of oocyte maturation, probably acting through the control of BMP15 levels and regulation of AKT signaling cascade. May also play a role in the early development of embryos. The protein is Zinc finger protein basonuclin-1 (Bnc1) of Mus musculus (Mouse).